The sequence spans 471 residues: Cysteine--tRNA ligase (471 aa).

Cys-30 contributes to the Zn(2+) binding site. The 'HIGH' region motif lies at 32-42 (PTVYNFAHIGN). Zn(2+) contacts are provided by Cys-212, His-237, and Glu-241. Residues 270–274 (KMSKS) carry the 'KMSKS' region motif. Lys-273 is a binding site for ATP.

Belongs to the class-I aminoacyl-tRNA synthetase family. In terms of assembly, monomer. Requires Zn(2+) as cofactor.

The protein resides in the cytoplasm. It carries out the reaction tRNA(Cys) + L-cysteine + ATP = L-cysteinyl-tRNA(Cys) + AMP + diphosphate. The chain is Cysteine--tRNA ligase from Leptospira interrogans serogroup Icterohaemorrhagiae serovar copenhageni (strain Fiocruz L1-130).